Here is a 368-residue protein sequence, read N- to C-terminus: Ferrochelatase (368 aa).

Fe cation-binding residues include H209 and E290.

This sequence belongs to the ferrochelatase family.

The protein resides in the cytoplasm. It catalyses the reaction heme b + 2 H(+) = protoporphyrin IX + Fe(2+). It participates in porphyrin-containing compound metabolism; protoheme biosynthesis; protoheme from protoporphyrin-IX: step 1/1. Its function is as follows. Catalyzes the ferrous insertion into protoporphyrin IX. The sequence is that of Ferrochelatase from Herminiimonas arsenicoxydans.